Reading from the N-terminus, the 266-residue chain is MAAGEISTPQEYISHHLHHLQVGTGFWSINVDSMFFSIALGILFLVIFHRVAKRATSGVPGKLQTAVELIIGFVDGTVRDMFHGKSKLIAPLALTIFVWVFLMNLMDLLPIDLLPQAWAGIYSLLGYDPAHAYLRAVPTADVNITLSMALGVFILVLFYSIKMKGLGGFVKELTMQPFNHPVFIPINLILEGVSLLSKPISLGLRLFGNMYAGELIFILIAGLLPWWSQWLLNVPWAIFHILIITLQAFIFMVLTVVYLSMASEEH.

Transmembrane regions (helical) follow at residues 28-48 (SINVDSMFFSIALGILFLVIF), 88-108 (LIAPLALTIFVWVFLMNLMDL), 141-161 (DVNITLSMALGVFILVLFYSI), 206-226 (LFGNMYAGELIFILIAGLLPW), and 237-257 (AIFHILIITLQAFIFMVLTVV).

The protein belongs to the ATPase A chain family. In terms of assembly, F-type ATPases have 2 components, CF(1) - the catalytic core - and CF(0) - the membrane proton channel. CF(1) has five subunits: alpha(3), beta(3), gamma(1), delta(1), epsilon(1). CF(0) has three main subunits: a(1), b(2) and c(9-12). The alpha and beta chains form an alternating ring which encloses part of the gamma chain. CF(1) is attached to CF(0) by a central stalk formed by the gamma and epsilon chains, while a peripheral stalk is formed by the delta and b chains.

It is found in the cell inner membrane. Its function is as follows. Key component of the proton channel; it plays a direct role in the translocation of protons across the membrane. This chain is ATP synthase subunit a, found in Pectobacterium carotovorum subsp. carotovorum (strain PC1).